The following is a 157-amino-acid chain: Transcription elongation factor GreB (157 aa).

This sequence belongs to the GreA/GreB family. GreB subfamily.

Necessary for efficient RNA polymerase transcription elongation past template-encoded arresting sites. The arresting sites in DNA have the property of trapping a certain fraction of elongating RNA polymerases that pass through, resulting in locked ternary complexes. Cleavage of the nascent transcript by cleavage factors such as GreA or GreB allows the resumption of elongation from the new 3'terminus. GreB releases sequences of up to 9 nucleotides in length. This Salmonella typhi protein is Transcription elongation factor GreB.